We begin with the raw amino-acid sequence, 218 residues long: Ribose-5-phosphate isomerase A (218 aa).

Substrate contacts are provided by residues 28 to 31 (TGST), 81 to 84 (DSAD), and 94 to 97 (KGKG). Glu103 acts as the Proton acceptor in catalysis. Lys121 lines the substrate pocket.

The protein belongs to the ribose 5-phosphate isomerase family. As to quaternary structure, homodimer.

The enzyme catalyses aldehydo-D-ribose 5-phosphate = D-ribulose 5-phosphate. It participates in carbohydrate degradation; pentose phosphate pathway; D-ribose 5-phosphate from D-ribulose 5-phosphate (non-oxidative stage): step 1/1. Catalyzes the reversible conversion of ribose-5-phosphate to ribulose 5-phosphate. The sequence is that of Ribose-5-phosphate isomerase A from Blochmanniella pennsylvanica (strain BPEN).